Reading from the N-terminus, the 201-residue chain is UPF0301 protein Rleg2_0617 (201 aa).

Belongs to the UPF0301 (AlgH) family.

The polypeptide is UPF0301 protein Rleg2_0617 (Rhizobium leguminosarum bv. trifolii (strain WSM2304)).